A 232-amino-acid polypeptide reads, in one-letter code: Octanoyltransferase (232 aa).

One can recognise a BPL/LPL catalytic domain in the interval 44–219 (EHTADEVWVV…QLARQFGLVL (176 aa)). Substrate is bound by residues 83–90 (RGGQVTYH), 150–152 (ALG), and 163–165 (GLS). Residue C181 is the Acyl-thioester intermediate of the active site.

It belongs to the LipB family.

Its subcellular location is the cytoplasm. It carries out the reaction octanoyl-[ACP] + L-lysyl-[protein] = N(6)-octanoyl-L-lysyl-[protein] + holo-[ACP] + H(+). It participates in protein modification; protein lipoylation via endogenous pathway; protein N(6)-(lipoyl)lysine from octanoyl-[acyl-carrier-protein]: step 1/2. Catalyzes the transfer of endogenously produced octanoic acid from octanoyl-acyl-carrier-protein onto the lipoyl domains of lipoate-dependent enzymes. Lipoyl-ACP can also act as a substrate although octanoyl-ACP is likely to be the physiological substrate. This is Octanoyltransferase from Xanthomonas euvesicatoria pv. vesicatoria (strain 85-10) (Xanthomonas campestris pv. vesicatoria).